Reading from the N-terminus, the 436-residue chain is Histidine--tRNA ligase 1 (436 aa).

Belongs to the class-II aminoacyl-tRNA synthetase family. As to quaternary structure, homodimer.

The protein resides in the cytoplasm. The catalysed reaction is tRNA(His) + L-histidine + ATP = L-histidyl-tRNA(His) + AMP + diphosphate + H(+). The chain is Histidine--tRNA ligase 1 from Bacillus cereus (strain ATCC 10987 / NRS 248).